A 349-amino-acid chain; its full sequence is Protein AMBP (349 aa).

A signal peptide spans 1–19 (MQGLGALFLLLTACLTLKA). 2 residues coordinate 3-hydroxy-L-kynurenine: Cys-52 and Lys-110. The cysteines at positions 90 and 187 are disulfide-linked. Residue Asn-114 is glycosylated (N-linked (GlcNAc...) asparagine). Residues Lys-136 and Lys-148 each contribute to the 3-hydroxy-L-kynurenine site. Ser-214 is a glycosylation site (O-linked (Xyl...) (chondroitin sulfate) serine). 6 disulfides stabilise this stretch: Cys-230–Cys-280, Cys-239–Cys-263, Cys-255–Cys-276, Cys-286–Cys-336, Cys-295–Cys-319, and Cys-311–Cys-332. 2 consecutive BPTI/Kunitz inhibitor domains span residues 230-280 (CQLN…LQTC) and 286-336 (CNLP…KEYC). N-linked (GlcNAc...) asparagine glycosylation occurs at Asn-233.

It in the N-terminal section; belongs to the calycin superfamily. Lipocalin family. Monomer. Homodimer. In plasma, it occurs as a monomer or dimer and in covalently-linked complexes with immunoglobulin A (IgA), ALB/albumin and F2/prothrombin. Chromophore-bound alpha-1-microglobulin interacts with the constant region of immunoglobulin A. Chromophore-bound alpha-1-microglobulin interacts with ALB with molar ratio 2:1 and 1:1; this interaction does not prevent fatty acid binding to ALB. Interacts with F2/prothrombin (via N-terminus) with molar ratio 2:1 and 1:1; this interaction does not prevent the activation of prothrombin to thrombin. Interacts with NDUFAB1, a subunit of mitochondrial complex I. Interacts with FN1. As to quaternary structure, I-alpha-I plasma protease inhibitors are assembled from one or two heavy chains (HC) and one light chain, bikunin. Inter-alpha-inhibitor (I-alpha-I) is composed of ITIH1/HC1, ITIH2/HC2 and bikunin, and pre-alpha-inhibitor (P-alpha-I) of ITIH3/HC3 and bikunin. Interacts with TNFAIP6 (via Link domain). In terms of assembly, monomer. Also occurs as a complex with tryptase in mast cells. In terms of processing, the precursor is proteolytically processed into separately functioning proteins. Post-translationally, 3-hydroxykynurenine, an oxidized tryptophan metabolite that is common in biological fluids, reacts with Cys-53, Lys-111, Lys-137, and Lys-149 to form heterogeneous polycyclic chromophores including hydroxanthommatin. The reaction by alpha-1-microglobulin is autocatalytic; the human protein forms chromophore even when expressed in insect and bacterial cells. The chromophore can react with accessible cysteines forming non-reducible thioether cross-links with other molecules of alpha-1-microglobulin or with other proteins such as Ig alpha-1 chain C region 'Cys-352'. Heavy chains are interlinked with bikunin via a chondroitin 4-sulfate bridge to the C-terminal aspartate. In terms of processing, proteolytically cleaved by PRSS3 at Kunitz domain 2. As to expression, expressed by the liver and secreted in plasma.

The protein localises to the secreted. It localises to the endoplasmic reticulum. It is found in the cytoplasm. Its subcellular location is the cytosol. The protein resides in the cell membrane. The protein localises to the nucleus membrane. It localises to the mitochondrion inner membrane. It is found in the extracellular space. Its subcellular location is the extracellular matrix. In terms of biological role, antioxidant and tissue repair protein with reductase, heme-binding and radical-scavenging activities. Removes and protects against harmful oxidants and repairs macromolecules in intravascular and extravascular spaces and in intracellular compartments. Intravascularly, plays a regulatory role in red cell homeostasis by preventing heme- and reactive oxygen species-induced cell damage. Binds and degrades free heme to protect fetal and adult red blood cells from hemolysis. Reduces extracellular methemoglobin, a Fe3+ (ferric) form of hemoglobin that cannot bind oxygen, back to the Fe2+ (ferrous) form deoxyhemoglobin, which has oxygen-carrying potential. Upon acute inflammation, inhibits oxidation of low-density lipoprotein particles by MPO and limits vascular damage. Extravascularly, protects from oxidation products formed on extracellular matrix structures and cell membranes. Catalyzes the reduction of carbonyl groups on oxidized collagen fibers and preserves cellular and extracellular matrix ultrastructures. Importantly, counteracts the oxidative damage at blood-placenta interface, preventing leakage of free fetal hemoglobin into the maternal circulation. Intracellularly, has a role in maintaining mitochondrial redox homeostasis. Bound to complex I of the respiratory chain of mitochondria, may scavenge free radicals and preserve mitochondrial ATP synthesis. Protects renal tubule epithelial cells from heme-induced oxidative damage to mitochondria. Reduces cytochrome c from Fe3+ (ferric) to the Fe2+ (ferrous) state through formation of superoxide anion radicals in the presence of ascorbate or NADH/NADPH electron donor cofactors, ascorbate being the preferred cofactor. Has a chaperone role in facilitating the correct folding of bikunin in the endoplasmic reticulum compartment. Functionally, kunitz-type serine protease inhibitor and structural component of extracellular matrix with a role in extracellular space remodeling and cell adhesion. Among others, has antiprotease activity toward kallikrein, a protease involved in airway inflammation; inhibits GZMK/granzyme, a granule-stored serine protease involved in NK and T cell cytotoxic responses; and inhibits PLG/plasmin, a protease required for activation of matrix metalloproteinases. As part of I-alpha-I complex, provides for the heavy chains to be transferred from I-alpha-I complex to hyaluronan in the presence of TNFAIP6, in a dynamic process that releases free bikunin and remodels extracellular matrix proteoglycan structures. Free bikunin, but not its heavy chain-bound form, acts as a potent protease inhibitor in airway secretions. Part of hyaluronan-rich extracellular matrix that surrounds oocyte during cumulus oophorus expansion, an indispensable process for proper ovulation. Also inhibits calcium oxalate crystallization. Its function is as follows. Kunitz-type serine protease inhibitor. Has high catalytic efficiency for F10/blood coagulation factor Xa and may act as an anticoagulant by inhibiting prothrombin activation. Inhibits trypsin and mast cell CMA1/chymase and tryptase proteases. This chain is Protein AMBP (Ambp), found in Rattus norvegicus (Rat).